A 426-amino-acid polypeptide reads, in one-letter code: Docking protein 3 (426 aa).

Positions 4-115 (PVKDGIIYVQ…WIEQLCQLAF (112 aa)) constitute a PH domain. One can recognise an IRS-type PTB domain in the interval 145–249 (DLTEFPVLVL…ACQQQGQESP (105 aa)). The disordered stretch occupies residues 243–282 (QQGQESPQPSAQGLSNQPWGAEAEDPQCSPTLGRAHSGSH). Residues 247–260 (ESPQPSAQGLSNQP) show a composition bias toward polar residues. Residue Tyr331 is modified to Phosphotyrosine. A disordered region spans residues 357–426 (GCRQAPEGHS…RDGPGARDWS (70 aa)). Basic residues predominate over residues 402–411 (KPQRTLRAKL).

It belongs to the DOK family. Type A subfamily. In terms of assembly, homooligomer. Interacts with GRB2 and INPP5D/SHIP. Tyrosine-phosphorylated in the presence of GRB2.

It localises to the cytoplasm. Its subcellular location is the cell membrane. In terms of biological role, DOK proteins are enzymatically inert adaptor or scaffolding proteins. They provide a docking platform for the assembly of multimolecular signaling complexes. Plays a role as negative regulator of the mobilization of calcium ions and of calcium signaling. The chain is Docking protein 3 (DOK3) from Gallus gallus (Chicken).